The following is a 265-amino-acid chain: Short-chain dehydrogenase/reductase phqE (265 aa).

T23, S24, I26, S46, N47, K50, D76, R131, V203, and T205 together coordinate NADP(+). A helical membrane pass occupies residues 25–45; sequence GIGFAVCAAALGHGAIVTIVG.

This sequence belongs to the short-chain dehydrogenases/reductases (SDR) family. The cofactor is NADP(+).

Its subcellular location is the membrane. It participates in alkaloid biosynthesis. In terms of biological role, short-chain dehydrogenase/reductase; part of the gene cluster that mediates the biosynthesis of paraherquamide, a fungal indole alkaloid that belongs to a family of natural products containing a characteristic bicyclo[2.2.2]diazaoctane core. The first steps in the biosynthesis of paraherquamide is the production of the beta-methyl-proline precursor from L-isoleucine. They require oxidation of a terminally hydroxylated L-isoleucine to the corresponding aldehyde by enzymes which have still to be identified. Spontaneous cyclization and dehydration would yield the 4-methyl pyrolline-5-carboxylic acid, which is then reduced by the pyrroline-5-carboxylate reductase phqD leading to the beta-methyl-proline precursor. The next step of paraherquamide biosynthesis involves coupling of beta-methyl-proline and L-tryptophan by the bimodular NRPS phqB, to produce a monooxopiperazine intermediate. The reductase (R) domain of phqB utilizes NADPH for hydride transfer to reduce the thioester bond of the T domain-tethered linear dipeptide to a hemithioaminal intermediate, which spontaneously cleaves the C-S bond to release the aldehyde product. This compound undergoes spontaneous cyclization and dehydration to give a dienamine which is reverse prenylated at C-2 by the reverse prenyltransferase phqJ. The other prenyltransferase present in the cluster, phqI may be a redundant gene in the pathway. During biosynthetic assembly, the key step to produce the polycyclic core is catalyzed by the bifunctional reductase and intramolecular [4+2] Diels-Alderase, phqE, resulting in formation of the [2.2.2] diazaoctane intermediate preparaherquamide. Following formation of preparaherquamide, an indole 2,3-epoxidation-initiated pinacol-like rearrangement is catalyzed by the phqK FAD-dependent monooxygenase. The prenyltransferase phqA, the cytochrome P450 monooxygenase phqL, and the FAD-linked oxidoreductase phqH (or the cytochrome P450 monooxygenase phqM), are proposed to be involved in the formation of the pyran ring. The FAD-dependent monooxygenase phqK is likely responsible for generation of the spiro-oxindole, and the N-methylation is likely mediated by the phqN methyltransferase leading to the isolable natural product paraherquamide F. However, the order of these biosynthetic steps has still to be determined. In late-stage paraherquamide biosynthesis, the third P450 monooxygenase, phqO, is probably responsible for the C-14 hydroxylation, transforming paraherquamide F to paraherquamide G, and paraherquamide E to the final product paraherquamide A. The expansion from the 6-membered ring pyran (in paraherquamides F and G) to the 7-membered dioxepin ring (in paraherquamides A and E) represents a poorly understood but intriguing process that probably involves the 2-oxoglutarate-dependent dioxygenase phqC. Finally, the remaining members of the paraherquamide cluster, including phqI as well as phqM (or phqH), do not have a clearly prescribed role and appear to be redundant. The sequence is that of Short-chain dehydrogenase/reductase phqE from Penicillium fellutanum.